The following is a 700-amino-acid chain: Dipeptidyl aminopeptidase 1 (700 aa).

The N-terminal stretch at 1 to 27 is a signal peptide; sequence MAKRIFSVSFLLVLLNVLHICIKFSVA. 5 N-linked (GlcNAc...) asparagine glycosylation sites follow: asparagine 52, asparagine 144, asparagine 265, asparagine 337, and asparagine 373. Positions 210–369 are excised as a propeptide; that stretch reads DNVNEIKHLD…SPKRELEINE (160 aa). Disulfide bonds link cysteine 395-cysteine 446 and cysteine 439-cysteine 478. Cysteine 398 is a catalytic residue. The residue at position 416 (threonine 416) is a Sulfothreonine. Chloride contacts are provided by phenylalanine 450 and tyrosine 452. N-linked (GlcNAc...) asparagine glycans are attached at residues asparagine 481, asparagine 490, and asparagine 507. Tyrosine 549 contributes to the chloride binding site. The N-linked (GlcNAc...) asparagine glycan is linked to asparagine 615. Catalysis depends on residues histidine 624 and asparagine 648. Residue asparagine 667 is glycosylated (N-linked (GlcNAc...) asparagine).

Belongs to the peptidase C1 family. In terms of assembly, monomer. Requires chloride as cofactor.

It is found in the vacuole lumen. It localises to the parasitophorous vacuole lumen. The enzyme catalyses Release of an N-terminal dipeptide, Xaa-Yaa-|-Zaa-, except when Xaa is Arg or Lys, or Yaa or Zaa is Pro.. Its function is as follows. Thiol protease that cleaves dipeptides from the N-terminus of protein substrates. Active against a broad range of dipeptide substrates composed of both polar and hydrophobic amino acids. Proline cannot occupy the P1 position and arginine or lysine cannot occupy the P2 position of the substrate. Involved in host hemoglobin degradation by generating dipeptides from hemoglobin-derived oligopeptides. The polypeptide is Dipeptidyl aminopeptidase 1 (Plasmodium falciparum (isolate 3D7)).